The sequence spans 441 residues: Probable cytosolic Fe-S cluster assembly factor v1g210509 (441 aa).

[4Fe-4S] cluster-binding residues include C24, C72, C75, C78, C196, C252, and C401.

This sequence belongs to the NARF family.

Component of the cytosolic iron-sulfur (Fe/S) protein assembly machinery. Required for maturation of extramitochondrial Fe/S proteins. This Nematostella vectensis (Starlet sea anemone) protein is Probable cytosolic Fe-S cluster assembly factor v1g210509.